A 353-amino-acid chain; its full sequence is Ribosome biogenesis protein BRX1 homolog (353 aa).

Over residues 1 to 10 (MAATKRKRRG) the composition is skewed to basic residues. Residues 1–46 (MAATKRKRRGGFAVQAKKPKRNEKDAEPPAKRHATAEEVEEEERDR) form a disordered region. Positions 22–36 (NEKDAEPPAKRHATA) are enriched in basic and acidic residues. Positions 60–249 (ERILIFSSRG…LIKIFQGSFG (190 aa)) constitute a Brix domain. K160 is covalently cross-linked (Glycyl lysine isopeptide (Lys-Gly) (interchain with G-Cter in SUMO2)). S261 is subject to Phosphoserine. Position 276 is an N6-acetyllysine (K276). Glycyl lysine isopeptide (Lys-Gly) (interchain with G-Cter in SUMO2) cross-links involve residues K314 and K322.

It belongs to the BRX1 family.

Its subcellular location is the nucleus. It is found in the nucleolus. Required for biogenesis of the 60S ribosomal subunit. This is Ribosome biogenesis protein BRX1 homolog (BRIX1) from Pongo abelii (Sumatran orangutan).